We begin with the raw amino-acid sequence, 125 residues long: Small ribosomal subunit protein uS13 (125 aa).

Positions 92–125 (RRHLPVHGQRTKTNARTRKGPKKTVAGKKKAGKK) are disordered.

Belongs to the universal ribosomal protein uS13 family. In terms of assembly, part of the 30S ribosomal subunit. Forms a loose heterodimer with protein S19. Forms two bridges to the 50S subunit in the 70S ribosome.

In terms of biological role, located at the top of the head of the 30S subunit, it contacts several helices of the 16S rRNA. In the 70S ribosome it contacts the 23S rRNA (bridge B1a) and protein L5 of the 50S subunit (bridge B1b), connecting the 2 subunits; these bridges are implicated in subunit movement. Contacts the tRNAs in the A and P-sites. The polypeptide is Small ribosomal subunit protein uS13 (Saccharopolyspora erythraea (strain ATCC 11635 / DSM 40517 / JCM 4748 / NBRC 13426 / NCIMB 8594 / NRRL 2338)).